A 130-amino-acid polypeptide reads, in one-letter code: Gonadotropin subunit beta-1 (130 aa).

The signal sequence occupies residues 1–18 (MRMHFVVMVMLLPALMMA). Cystine bridges form between Cys26–Cys74, Cys40–Cys89, Cys51–Cys105, Cys55–Cys107, and Cys110–Cys117. An N-linked (GlcNAc...) asparagine glycan is attached at Asn30.

The protein belongs to the glycoprotein hormones subunit beta family. In terms of assembly, heterodimer of an alpha and a beta chain.

The protein localises to the secreted. Its function is as follows. Involved in gametogenesis and steroidogenesis. The chain is Gonadotropin subunit beta-1 (cgba) from Cyprinus carpio (Common carp).